The sequence spans 244 residues: 7-cyano-7-deazaguanine synthase (244 aa).

Position 17–27 (17–27 (FSGGQDSTTCL)) interacts with ATP. Zn(2+)-binding residues include cysteine 205, cysteine 220, cysteine 223, and cysteine 226.

It belongs to the QueC family. Requires Zn(2+) as cofactor.

It catalyses the reaction 7-carboxy-7-deazaguanine + NH4(+) + ATP = 7-cyano-7-deazaguanine + ADP + phosphate + H2O + H(+). The protein operates within purine metabolism; 7-cyano-7-deazaguanine biosynthesis. Its function is as follows. Catalyzes the ATP-dependent conversion of 7-carboxy-7-deazaguanine (CDG) to 7-cyano-7-deazaguanine (preQ(0)). This Bordetella pertussis (strain Tohama I / ATCC BAA-589 / NCTC 13251) protein is 7-cyano-7-deazaguanine synthase.